Reading from the N-terminus, the 1058-residue chain is MAYRGGGRGGRGGEQRPPYSGRGDVPGRGGGGGGGGAPPYRPASGFVWPPPGMTPRPGPPQPQYPRPGPPAVVYGAPMPAAHHQGAYQPGGVYRAPSPGVPVIGGYARSTPVTIRAPPPSHSSAPAPYQPAAAAPAPSSSSTAPSATALAKEFEQKLFVSETALAPPAAVASAAAAPAGEASVESDKDLAPVSKKGLAHPARPGFGAAGKKVMIRANHFLVNVADNNLFHYDVSINPESKSRATNREVLNELIKLHGKTSLGGKLPAYDGRKSLYTAGSLPFESEEFVVKLIDPEKKDKERAEREYKITIRIAGRTDLYHLQQFLLGRQRDMPQETIQVLDVVLRESPSWNYVTVSRSFFSTQFGHRGDIGEGLECWRGYYQSLRPTQMGLSLNIDISATSFFKPVTVIQFVEEFLNIRDTSRPLSDRDRVKIKKALRGVRIETNHQEDQIRRYKITGITPIPMSQLIFPVDDNGTRKTVVQYFWDRYNYRLKYASWPCLQSGSDSRPVYLPMEVCKIVEGQRYSKKLNDKQVTNILRATCQRPQQREQSIHEMVLHNKYTEDRFAQEFGIKVCNDLVSVPARVLPPPMLKYHDSGREKTCAPSVGQWNMINKKMINGGTVDNWTCLSFSRMRPEEVQRFCGDLIQMCNATGMSFNPRPVVDVRSTNPNNIENALRDVHRRTSELLAREGKGGLQLLIVILPEVSGSYGKIKRVCETDLGIVSQCCLPRHASRPNKQYLENVALKINVKVGGRNTVLERAFIRNGIPFVSEVPTIIFGADVTHPPPGEDSASSIAAVVASMDWPEITKYRGLVSAQPHRQEIIEDLFSVGKDPVKVVNGGMIRELLIAFRKKTGRRPERIIFYRDGVSEGQFSHVLLHEMDAIRKACASLEEGYLPPVTFVVVQKRHHTRLFPEVHGRRDMTDKSGNILPGTVVDRQICHPTEFDFYLCSHAGIQGTSRPTHYHVLYDENHFTADALQSLTNNLCYTYARCTRAVSVVPPAYYAHLAAFRARYYVEGESSDGGSTPGSSGQAVAREGPVEVRQLPKIKENVKDVMFYC.

Composition is skewed to gly residues over residues 1-12 (MAYRGGGRGGRG) and 24-37 (DVPGRGGGGGGGGA). Disordered stretches follow at residues 1 to 77 (MAYR…YGAP) and 115 to 147 (RAPPPSHSSAPAPYQPAAAAPAPSSSSTAPSAT). The span at 48–70 (WPPPGMTPRPGPPQPQYPRPGPP) shows a compositional bias: pro residues. Residues 121–147 (HSSAPAPYQPAAAAPAPSSSSTAPSAT) are compositionally biased toward low complexity. The 114-residue stretch at 407-520 (TVIQFVEEFL…LPMEVCKIVE (114 aa)) folds into the PAZ domain. A Piwi domain is found at 696–1016 (LLIVILPEVS…AAFRARYYVE (321 aa)).

This sequence belongs to the argonaute family. Ago subfamily.

It is found in the nucleus. Its subcellular location is the nucleolus. Functionally, essential for the progression of premeiotic mitosis and meiosis during sporogenesis. Regulates the cell division of premeiotic germ cells, the proper modification of meiotic chromosomes, and the faithful progression of meiosis, probably via small RNA-mediated gene silencing. May be involved in histone H3 'Lys-9' demethylation in the pericentromeric region. This chain is Protein argonaute MEL1 (MEL1), found in Oryza sativa subsp. japonica (Rice).